We begin with the raw amino-acid sequence, 452 residues long: UPF0210 protein Dred_1672 (452 aa).

It belongs to the UPF0210 family. As to quaternary structure, homodimer.

In Desulforamulus reducens (strain ATCC BAA-1160 / DSM 100696 / MI-1) (Desulfotomaculum reducens), this protein is UPF0210 protein Dred_1672.